The sequence spans 447 residues: Serine/threonine-protein phosphatase 2A 55 kDa regulatory subunit B delta isoform (447 aa).

WD repeat units lie at residues 26–65 (AEADIISTVEFNYSGELLATGDKGGRVVIFQREQESKNRP), 91–132 (EIEE…KRAE), 175–213 (AHTYHINSISVNSDYETYLSADDLRINLWHLEITDRSFN), 224–264 (ELTE…LCDR), 283–321 (EIISSISDVKFSHSGRYMMTRDYLSVKVWDLNMENRPVE), 338–379 (ENDC…DITL), and 414–447 (DFNKKILHTAWHPKENVIAVAATNNLYIFQDKMN).

The protein belongs to the phosphatase 2A regulatory subunit B family. PP2A consists of a common heterodimeric core enzyme, composed of a 36 kDa catalytic subunit (subunit C) and a 65 kDa constant regulatory subunit (PR65 or subunit A), that associates with a variety of regulatory subunits.

It is found in the cytoplasm. Functionally, substrate-recognition subunit of protein phosphatase 2A (PP2A) that plays a key role in cell cycle by controlling mitosis entry and exit. The activity of PP2A complexes containing PPP2R2D (PR55-delta) fluctuate during the cell cycle: the activity is high in interphase and low in mitosis. This chain is Serine/threonine-protein phosphatase 2A 55 kDa regulatory subunit B delta isoform (ppp2r2d), found in Danio rerio (Zebrafish).